Consider the following 544-residue polypeptide: Protein angel homolog 2 (544 aa).

This sequence belongs to the CCR4/nocturin family.

This is Protein angel homolog 2 (Angel2) from Mus musculus (Mouse).